Here is a 463-residue protein sequence, read N- to C-terminus: Argininosuccinate lyase (463 aa).

The protein belongs to the lyase 1 family. Argininosuccinate lyase subfamily.

The protein resides in the cytoplasm. It catalyses the reaction 2-(N(omega)-L-arginino)succinate = fumarate + L-arginine. The protein operates within amino-acid biosynthesis; L-arginine biosynthesis; L-arginine from L-ornithine and carbamoyl phosphate: step 3/3. This Ruegeria pomeroyi (strain ATCC 700808 / DSM 15171 / DSS-3) (Silicibacter pomeroyi) protein is Argininosuccinate lyase.